We begin with the raw amino-acid sequence, 623 residues long: Heterogeneous nuclear ribonucleoprotein L (623 aa).

A compositionally biased stretch (basic residues) spans 1–16 (MSRRLLPRAEKRRRRL). The disordered stretch occupies residues 1–97 (MSRRLLPRAE…NYDDPHKTPA (97 aa)). The span at 17–27 (EQRQQPDEQLR) shows a compositional bias: basic and acidic residues. The segment covering 28 to 37 (RAGAMVKMAA) has biased composition (low complexity). Residues 38 to 54 (AGGGGGGGRYYGGGNEG) show a composition bias toward gly residues. Residues lysine 59 and lysine 62 each participate in a glycyl lysine isopeptide (Lys-Gly) (interchain with G-Cter in SUMO2) cross-link. Positions 69–87 (QHGGGGGGGSGAAGGGGGE) are enriched in gly residues. Serine 98 carries the post-translational modification Phosphoserine. An RRM 1 domain is found at 99 to 173 (PVVHIRGLID…HPAFVNYSTS (75 aa)). Lysine 133 is covalently cross-linked (Glycyl lysine isopeptide (Lys-Gly) (interchain with G-Cter in SUMO2)). Serine 182 carries the post-translational modification Phosphoserine. Residues 190–267 (SVLLFTILNP…CTLKIEYAKP (78 aa)) enclose the RRM 2 domain. Lysine 266 bears the N6-acetyllysine mark. The segment covering 281 to 298 (DYTNPNLSGQGDPGSNPN) has biased composition (polar residues). The tract at residues 281–413 (DYTNPNLSGQ…PPPPDYGPHA (133 aa)) is disordered. A phosphoserine mark is found at serine 288 and serine 295. Lysine 299 is covalently cross-linked (Glycyl lysine isopeptide (Lys-Gly) (interchain with G-Cter in SUMO2)). Arginine 388 and arginine 392 each carry asymmetric dimethylarginine. The span at 398 to 409 (GHPPPPPPPPDY) shows a compositional bias: pro residues. Residue serine 415 is modified to Phosphoserine. RRM domains follow at residues 416–490 (PVLM…VSKQ) and 498–586 (SYGL…WDSK). At serine 578 the chain carries Phosphoserine; by CaMK4. A Glycyl lysine isopeptide (Lys-Gly) (interchain with G-Cter in SUMO2) cross-link involves residue lysine 602.

As to quaternary structure, identified in a IGF2BP1-dependent mRNP granule complex containing untranslated mRNAs. Interacts with HNRNPLL. Interacts with APEX1; the interaction is DNA-dependent. Component of a complex with SETD2. Interacts with ELAVL1. Part of a transcription inhibitory ribonucleoprotein complex composed at least of the circular RNA circZNF827, ZNF827 and HNRNPK. Interacts with CHD8 in an RNA-dependent manner. Several isoelectric forms of the L protein are probably the results of post-translational modifications. Post-translationally, phosphorylation at Ser-578 by CaMK4 enhances interaction with a CaMK4-responsive RNA element (CaRRE1), and prevents inclusion of the stress axis-regulated exon (STREX) of the KCNMA1 potassium channel transcripts upon membrane depolarization.

Its subcellular location is the nucleus. It localises to the nucleoplasm. It is found in the cytoplasm. Functionally, splicing factor binding to exonic or intronic sites and acting as either an activator or repressor of exon inclusion. Exhibits a binding preference for CA-rich elements. Component of the heterogeneous nuclear ribonucleoprotein (hnRNP) complexes and associated with most nascent transcripts. Associates, together with APEX1, to the negative calcium responsive element (nCaRE) B2 of the APEX2 promoter. As part of a ribonucleoprotein complex composed at least of ZNF827, HNRNPK and the circular RNA circZNF827 that nucleates the complex on chromatin, may negatively regulate the transcription of genes involved in neuronal differentiation. Regulates alternative splicing of a core group of genes involved in neuronal differentiation, likely by mediating H3K36me3-coupled transcription elongation and co-transcriptional RNA processing via interaction with CHD8. In Rattus norvegicus (Rat), this protein is Heterogeneous nuclear ribonucleoprotein L.